The sequence spans 412 residues: Lysosomal phospholipase A and acyltransferase (412 aa).

The N-terminal stretch at 1-33 is a signal peptide; the sequence is MGLHLRPYRVGLLPDGLLFLLLLLMLLADPALP. Asp46 serves as a coordination point for substrate. Residues Cys65 and Cys89 are joined by a disulfide bond. Residue Asn99 is glycosylated (N-linked (GlcNAc...) asparagine). Ser198 functions as the Acyl-ester intermediate in the catalytic mechanism. Ser198 contacts Zn(2+). Position 199 (Met199) interacts with substrate. N-linked (GlcNAc...) asparagine glycans are attached at residues Asn273 and Asn289. 2 residues coordinate Zn(2+): Asp340 and Cys355. Residues Asp360 and His392 each act as charge relay system in the active site. His392 contributes to the Zn(2+) binding site. N-linked (GlcNAc...) asparagine glycosylation occurs at Asn398.

The protein belongs to the AB hydrolase superfamily. Lipase family. Post-translationally, N-glycosylated. N-glycosylation is important for maturation of the enzyme and normal subcellular location. In terms of tissue distribution, detected in blood plasma (at protein level). Ubiquitous. Highly expressed in heart, placenta, skeletal muscle, kidney and pancreas. Detected at lower levels in spleen, thymus, prostate, testis, ovary, small intestine, colon and peripheral blood leukocytes.

It localises to the lysosome. Its subcellular location is the secreted. It is found in the membrane. It carries out the reaction a 1,2-diacyl-sn-glycero-3-phosphocholine + H2O = a 2-acyl-sn-glycero-3-phosphocholine + a fatty acid + H(+). The catalysed reaction is 1-hexadecanoyl-2-(9Z-octadecenoyl)-sn-glycero-3-phosphocholine + H2O = 2-(9Z-octadecenoyl)-sn-glycero-3-phosphocholine + hexadecanoate + H(+). It catalyses the reaction 1-hexadecanoyl-2-glutaroyl-sn-glycero-3-phosphocholine + H2O = 2-glutaroyl-sn-glycero-3-phosphocholine + hexadecanoate + H(+). The enzyme catalyses 1-hexadecanoyl-2-nonadioyl-sn-glycero-3-phosphocholine + H2O = 2-nonadioyl-sn-glycero-3-phosphocholine + hexadecanoate + H(+). It carries out the reaction 1-hexadecanoyl-2-(5-oxopentanoyl)-sn-glycero-3-phosphocholine + H2O = 2-(5-oxopentanoyl)-sn-glycero-3-phosphocholine + hexadecanoate + H(+). The catalysed reaction is 1-hexadecanoyl-2-(9-oxononanoyl)-sn-glycero-3-phosphocholine + H2O = 2-(9-oxononanoyl)-sn-glycero-3-phosphocholine + hexadecanoate + H(+). It catalyses the reaction 1,2-dihexadecanoyl-sn-glycero-3-phosphocholine + H2O = 2-hexadecanoyl-sn-glycero-3-phosphocholine + hexadecanoate + H(+). The enzyme catalyses a 1,2-diacyl-sn-glycero-3-phosphocholine + H2O = a 1-acyl-sn-glycero-3-phosphocholine + a fatty acid + H(+). It carries out the reaction 1,2-di-(9Z-octadecenoyl)-sn-glycero-3-phosphocholine + H2O = 1-(9Z-octadecenoyl)-sn-glycero-3-phosphocholine + (9Z)-octadecenoate + H(+). The catalysed reaction is 1-hexadecanoyl-2-(9Z-octadecenoyl)-sn-glycero-3-phosphocholine + H2O = 1-hexadecanoyl-sn-glycero-3-phosphocholine + (9Z)-octadecenoate + H(+). It catalyses the reaction 1,2-dihexadecanoyl-sn-glycero-3-phosphocholine + H2O = 1-hexadecanoyl-sn-glycero-3-phosphocholine + hexadecanoate + H(+). The enzyme catalyses a 1-acyl-sn-glycero-3-phosphocholine + H2O = sn-glycerol 3-phosphocholine + a fatty acid + H(+). It carries out the reaction 1-hexadecanoyl-sn-glycero-3-phosphocholine + H2O = sn-glycerol 3-phosphocholine + hexadecanoate + H(+). The catalysed reaction is N-(acetyl)-sphing-4-enine + a 1,2-diacyl-sn-glycero-3-phosphoethanolamine = 1-O-acyl-N-(acetyl)-sphing-4-enine + a 2-acyl-sn-glycero-3-phosphoethanolamine. It catalyses the reaction 1-hexadecanoyl-2-(9Z-octadecenoyl)-sn-glycero-3-phosphoethanolamine + N-(acetyl)-sphing-4-enine = 2-(9Z-octadecenoyl)-sn-glycero-3-phosphoethanolamine + 1-hexadecanoyl-N-(acetyl)-sphing-4-enine. The enzyme catalyses 1-hexadecanoyl-2-(9Z,12Z-octadecadienoyl)-sn-glycero-3-phosphoethanolamine + N-(acetyl)-sphing-4-enine = 2-(9Z,12Z)-octadecadienoyl-sn-glycero-3-phosphoethanolamine + 1-hexadecanoyl-N-(acetyl)-sphing-4-enine. It carries out the reaction 1-hexadecanoyl-2-(5Z,8Z,11Z,14Z-eicosatetraenoyl)-sn-glycero-3-phosphoethanolamine + N-(acetyl)-sphing-4-enine = 2-(5Z,8Z,11Z,14Z)-eicosatetraenoyl-sn-glycero-3-phosphoethanolamine + 1-hexadecanoyl-N-(acetyl)-sphing-4-enine. The catalysed reaction is N-(acetyl)-sphing-4-enine + a 1,2-diacyl-sn-glycero-3-phosphoethanolamine = 1-O-acyl-N-(acetyl)-sphing-4-enine + a 1-acyl-sn-glycero-3-phosphoethanolamine. It catalyses the reaction 1-hexadecanoyl-2-(9Z-octadecenoyl)-sn-glycero-3-phosphoethanolamine + N-(acetyl)-sphing-4-enine = 1-(9Z-octadecenoyl)-N-(acetyl)-sphing-4-enine + 1-hexadecanoyl-sn-glycero-3-phosphoethanolamine. The enzyme catalyses 1-hexadecanoyl-2-(9Z,12Z-octadecadienoyl)-sn-glycero-3-phosphoethanolamine + N-(acetyl)-sphing-4-enine = 1-(9Z,12Z-octadecadienoyl)-N-acetylsphing-4-enine + 1-hexadecanoyl-sn-glycero-3-phosphoethanolamine. It carries out the reaction 1-hexadecanoyl-2-(5Z,8Z,11Z,14Z-eicosatetraenoyl)-sn-glycero-3-phosphoethanolamine + N-(acetyl)-sphing-4-enine = 1-(5Z,8Z,11Z,14Z)-eicosatetraenoyl-N-(acetyl)-sphing-4-enine + 1-hexadecanoyl-sn-glycero-3-phosphoethanolamine. The catalysed reaction is N-(acetyl)-sphing-4-enine + a 1,2-diacyl-sn-glycero-3-phosphocholine = 1-O-acyl-N-(acetyl)-sphing-4-enine + a 1-acyl-sn-glycero-3-phosphocholine. It catalyses the reaction 1-hexadecanoyl-2-(9Z-octadecenoyl)-sn-glycero-3-phosphocholine + N-(acetyl)-sphing-4-enine = 1-(9Z-octadecenoyl)-N-(acetyl)-sphing-4-enine + 1-hexadecanoyl-sn-glycero-3-phosphocholine. The enzyme catalyses 1-hexadecanoyl-2-(9Z,12Z-octadecadienoyl)-sn-glycero-3-phosphocholine + N-(acetyl)-sphing-4-enine = 1-(9Z,12Z-octadecadienoyl)-N-acetylsphing-4-enine + 1-hexadecanoyl-sn-glycero-3-phosphocholine. It carries out the reaction 1-hexadecanoyl-2-(5Z,8Z,11Z,14Z-eicosatetraenoyl)-sn-glycero-3-phosphocholine + N-(acetyl)-sphing-4-enine = 1-(5Z,8Z,11Z,14Z)-eicosatetraenoyl-N-(acetyl)-sphing-4-enine + 1-hexadecanoyl-sn-glycero-3-phosphocholine. The catalysed reaction is 1-hexadecanoyl-2-(4Z,7Z,10Z,13Z,16Z,19Z-docosahexaenoyl)-sn-glycero-3-phosphocholine + N-(acetyl)-sphing-4-enine = 1-(4Z,7Z,10Z,13Z,16Z,19Z-docosahexaenoyl)-N-(acetyl)-sphing-4-enine + 1-hexadecanoyl-sn-glycero-3-phosphocholine. It catalyses the reaction 1-octadecanoyl-2-(9Z-octadecenoyl)-sn-glycero-3-phosphocholine + N-(acetyl)-sphing-4-enine = 1-(9Z-octadecenoyl)-N-(acetyl)-sphing-4-enine + 1-octadecanoyl-sn-glycero-3-phosphocholine. The enzyme catalyses 1-octadecanoyl-2-(9Z,12Z)-octadecadienoyl-sn-glycero-3-phosphocholine + N-(acetyl)-sphing-4-enine = 1-(9Z,12Z-octadecadienoyl)-N-acetylsphing-4-enine + 1-octadecanoyl-sn-glycero-3-phosphocholine. It carries out the reaction 1-octadecanoyl-2-(5Z,8Z,11Z,14Z-eicosatetraenoyl)-sn-glycero-3-phosphocholine + N-(acetyl)-sphing-4-enine = 1-(5Z,8Z,11Z,14Z)-eicosatetraenoyl-N-(acetyl)-sphing-4-enine + 1-octadecanoyl-sn-glycero-3-phosphocholine. The catalysed reaction is 1-(9Z-octadecenoyl)-2-hexadecanoyl-sn-glycero-3-phosphocholine + N-(acetyl)-sphing-4-enine = 1-hexadecanoyl-N-(acetyl)-sphing-4-enine + 1-(9Z-octadecenoyl)-sn-glycero-3-phosphocholine. It catalyses the reaction 1-(9Z)-octadecenoyl-2-octadecanoyl-sn-glycero-3-phosphocholine + N-(acetyl)-sphing-4-enine = 1-octadecanoyl-N-(acetyl)-sphing-4-enine + 1-(9Z-octadecenoyl)-sn-glycero-3-phosphocholine. The enzyme catalyses 1,2-di-(9Z-octadecenoyl)-sn-glycero-3-phosphocholine + N-(acetyl)-sphing-4-enine = 1-(9Z-octadecenoyl)-N-(acetyl)-sphing-4-enine + 1-(9Z-octadecenoyl)-sn-glycero-3-phosphocholine. It carries out the reaction N-(acetyl)-sphing-4-enine + a 1,2-diacyl-sn-glycero-3-phosphocholine = 1-O-acyl-N-(acetyl)-sphing-4-enine + a 2-acyl-sn-glycero-3-phosphocholine. The catalysed reaction is 1-hexadecanoyl-2-(9Z-octadecenoyl)-sn-glycero-3-phosphocholine + N-(acetyl)-sphing-4-enine = 1-hexadecanoyl-N-(acetyl)-sphing-4-enine + 2-(9Z-octadecenoyl)-sn-glycero-3-phosphocholine. It catalyses the reaction 1-hexadecanoyl-2-(9Z,12Z-octadecadienoyl)-sn-glycero-3-phosphocholine + N-(acetyl)-sphing-4-enine = 2-(9Z,12Z-octadecadienoyl)-sn-glycero-3-phosphocholine + 1-hexadecanoyl-N-(acetyl)-sphing-4-enine. The enzyme catalyses 1-hexadecanoyl-2-(5Z,8Z,11Z,14Z-eicosatetraenoyl)-sn-glycero-3-phosphocholine + N-(acetyl)-sphing-4-enine = 1-hexadecanoyl-N-(acetyl)-sphing-4-enine + 2-(5Z,8Z,11Z,14Z)-eicosatetraenoyl-sn-glycero-3-phosphocholine. It carries out the reaction 1-hexadecanoyl-2-(4Z,7Z,10Z,13Z,16Z,19Z-docosahexaenoyl)-sn-glycero-3-phosphocholine + N-(acetyl)-sphing-4-enine = 2-(4Z,7Z,10Z,13Z,16Z,19Z-docosahexaenoyl)-sn-glycero-3-phosphocholine + 1-hexadecanoyl-N-(acetyl)-sphing-4-enine. The catalysed reaction is 1-hexadecanoyl-2-nonadioyl-sn-glycero-3-phosphocholine + N-(acetyl)-sphing-4-enine = 2-nonadioyl-sn-glycero-3-phosphocholine + 1-hexadecanoyl-N-(acetyl)-sphing-4-enine. It catalyses the reaction 1-octadecanoyl-2-(9Z-octadecenoyl)-sn-glycero-3-phosphocholine + N-(acetyl)-sphing-4-enine = 1-octadecanoyl-N-(acetyl)-sphing-4-enine + 2-(9Z-octadecenoyl)-sn-glycero-3-phosphocholine. The enzyme catalyses 1-octadecanoyl-2-(5Z,8Z,11Z,14Z-eicosatetraenoyl)-sn-glycero-3-phosphocholine + N-(acetyl)-sphing-4-enine = 1-octadecanoyl-N-(acetyl)-sphing-4-enine + 2-(5Z,8Z,11Z,14Z)-eicosatetraenoyl-sn-glycero-3-phosphocholine. It carries out the reaction 1-(9Z-octadecenoyl)-2-hexadecanoyl-sn-glycero-3-phosphocholine + N-(acetyl)-sphing-4-enine = 1-(9Z-octadecenoyl)-N-(acetyl)-sphing-4-enine + 2-hexadecanoyl-sn-glycero-3-phosphocholine. The catalysed reaction is 1-(9Z)-octadecenoyl-2-octadecanoyl-sn-glycero-3-phosphocholine + N-(acetyl)-sphing-4-enine = 2-octadecanoyl-sn-glycero-3-phosphocholine + 1-(9Z-octadecenoyl)-N-(acetyl)-sphing-4-enine. It catalyses the reaction a 1,2-diacyl-sn-glycero-3-phospho-L-serine + N-(acetyl)-sphing-4-enine = a 2-acyl-sn-glycero-3-phospho-L-serine + 1-O-acyl-N-(acetyl)-sphing-4-enine. The enzyme catalyses 1-octadecanoyl-2-(9Z-octadecenoyl)-sn-glycero-3-phospho-L-serine + N-(acetyl)-sphing-4-enine = 2-(9Z-octadecenoyl)-sn-glycero-3-phospho-L-serine + 1-octadecanoyl-N-(acetyl)-sphing-4-enine. It carries out the reaction a 1,2-diacyl-sn-glycero-3-phospho-L-serine + N-(acetyl)-sphing-4-enine = 1-O-acyl-N-(acetyl)-sphing-4-enine + a 1-acyl-sn-glycero-3-phospho-L-serine. The catalysed reaction is 1-octadecanoyl-2-(9Z-octadecenoyl)-sn-glycero-3-phospho-L-serine + N-(acetyl)-sphing-4-enine = 1-octadecanoyl-sn-glycero-3-phosphoserine + 1-(9Z-octadecenoyl)-N-(acetyl)-sphing-4-enine. It catalyses the reaction a 1,2-diacyl-sn-glycero-3-phospho-(1'-sn-glycerol) + N-(acetyl)-sphing-4-enine = 2-acyl-sn-glycero-3-phospho-(1'-sn-glycerol) + 1-O-acyl-N-(acetyl)-sphing-4-enine. The enzyme catalyses 1-octadecanoyl-2-(9Z-octadecenoyl)-sn-glycero-3-phospho-(1'-sn-glycerol) + N-(acetyl)-sphing-4-enine = 2-(9Z-octadecenoyl)-sn-glycero-3-phospho-(1'-sn-glycerol) + 1-octadecanoyl-N-(acetyl)-sphing-4-enine. It carries out the reaction a 1,2-diacyl-sn-glycero-3-phospho-(1'-sn-glycerol) + N-(acetyl)-sphing-4-enine = 1-O-acyl-N-(acetyl)-sphing-4-enine + 1-acyl-sn-glycero-3-phospho-(1'-sn-glycerol). The catalysed reaction is 1-octadecanoyl-2-(9Z-octadecenoyl)-sn-glycero-3-phospho-(1'-sn-glycerol) + N-(acetyl)-sphing-4-enine = 1-octadecanoyl-sn-glycero-3-phospho-(1'-sn-glycerol) + 1-(9Z-octadecenoyl)-N-(acetyl)-sphing-4-enine. It catalyses the reaction an N-acylethanolamine + a 1,2-diacyl-sn-glycero-3-phosphocholine = 2-(acylamino)ethyl fatty acid + a 2-acyl-sn-glycero-3-phosphocholine. The enzyme catalyses an N-acylethanolamine + a 1,2-diacyl-sn-glycero-3-phosphocholine = 2-(acylamino)ethyl fatty acid + a 1-acyl-sn-glycero-3-phosphocholine. It carries out the reaction N-(5Z,8Z,11Z,14Z-eicosatetraenoyl)-ethanolamine + 1,2-di-(9Z-octadecenoyl)-sn-glycero-3-phosphocholine = 2-[(5Z,8Z,11Z,14Z)-eicosatetraenoylamino]ethyl (9Z)-octadecenoate + (9Z-octadecenoyl)-sn-glycero-3-phosphocholine. The catalysed reaction is N-(9Z-octadecenoyl) ethanolamine + 1,2-di-(9Z-octadecenoyl)-sn-glycero-3-phosphocholine = 2-[(9Z)-octadecenoylamino]ethyl (9Z)-octadecenoate + (9Z-octadecenoyl)-sn-glycero-3-phosphocholine. It catalyses the reaction a 3-acyl-sn-glycerol + a 1,2-diacyl-sn-glycero-3-phosphocholine = a 1,3-diacylglycerol + a 1-acyl-sn-glycero-3-phosphocholine. The enzyme catalyses a 3-acyl-sn-glycerol + a 1,2-diacyl-sn-glycero-3-phosphocholine = a 1,3-diacylglycerol + a 2-acyl-sn-glycero-3-phosphocholine. It carries out the reaction 3-(9Z-octadecenoyl)-sn-glycerol + 1,2-di-(9Z-octadecenoyl)-sn-glycero-3-phosphocholine = 1,3-di-(9Z-octadecenoyl)-glycerol + (9Z-octadecenoyl)-sn-glycero-3-phosphocholine. The catalysed reaction is 3-hexadecanoyl-sn-glycerol + 1,2-di-(9Z-octadecenoyl)-sn-glycero-3-phosphocholine = 1-(9Z)-octadecenoyl-3-hexadecanoyl-sn-glycerol + (9Z-octadecenoyl)-sn-glycero-3-phosphocholine. It catalyses the reaction a 1-acyl-sn-glycerol + a 1,2-diacyl-sn-glycero-3-phosphocholine = a 1,3-diacylglycerol + a 2-acyl-sn-glycero-3-phosphocholine. The enzyme catalyses a 1-acyl-sn-glycerol + a 1,2-diacyl-sn-glycero-3-phosphocholine = a 1,3-diacylglycerol + a 1-acyl-sn-glycero-3-phosphocholine. It carries out the reaction 1-(9Z-octadecenoyl)-sn-glycerol + 1,2-di-(9Z-octadecenoyl)-sn-glycero-3-phosphocholine = 1,3-di-(9Z-octadecenoyl)-glycerol + (9Z-octadecenoyl)-sn-glycero-3-phosphocholine. The catalysed reaction is 1-hexadecanoyl-sn-glycerol + 1,2-di-(9Z-octadecenoyl)-sn-glycero-3-phosphocholine = 1-hexadecanoyl-3-(9Z)-octadecenoyl-sn-glycerol + (9Z-octadecenoyl)-sn-glycero-3-phosphocholine. It catalyses the reaction a 2-acylglycerol + a 1,2-diacyl-sn-glycero-3-phosphocholine = a 1,2-diacylglycerol + a 2-acyl-sn-glycero-3-phosphocholine. The enzyme catalyses a 2-acylglycerol + a 1,2-diacyl-sn-glycero-3-phosphocholine = a 1,2-diacylglycerol + a 1-acyl-sn-glycero-3-phosphocholine. It carries out the reaction 2-hexadecanoylglycerol + 1,2-di-(9Z-octadecenoyl)-sn-glycero-3-phosphocholine = 1-(9Z)-octadecenoyl-2-hexadecanoylglycerol + (9Z-octadecenoyl)-sn-glycero-3-phosphocholine. The catalysed reaction is 1-O-alkylglycerol + a 1,2-diacyl-sn-glycero-3-phosphocholine = 1-O-alkyl-3-acylglycerol + a 1-acyl-sn-glycero-3-phosphocholine. It catalyses the reaction 1-O-alkylglycerol + a 1,2-diacyl-sn-glycero-3-phosphocholine = 1-O-alkyl-3-acylglycerol + a 2-acyl-sn-glycero-3-phosphocholine. The enzyme catalyses 1-O-hexadecylglycerol + 1,2-di-(9Z-octadecenoyl)-sn-glycero-3-phosphocholine = 1-O-hexadecyl-3-(9Z)-octadecenoylglycerol + (9Z-octadecenoyl)-sn-glycero-3-phosphocholine. It carries out the reaction 1-O-alkyl-2-acyl-sn-glycerol + a 1,2-diacyl-sn-glycero-3-phosphocholine = 1-O-alkyl-2,3-diacyl-sn-glycerol + a 2-acyl-sn-glycero-3-phosphocholine. The catalysed reaction is 1-O-alkyl-2-acyl-sn-glycerol + a 1,2-diacyl-sn-glycero-3-phosphocholine = 1-O-alkyl-2,3-diacyl-sn-glycerol + a 1-acyl-sn-glycero-3-phosphocholine. It catalyses the reaction 1-O-hexadecyl-2-acetyl-sn-glycerol + 1,2-di-(9Z-octadecenoyl)-sn-glycero-3-phosphocholine = 1-O-hexadecyl-2-acetyl-3-(9Z)-octadecenoyl-sn-glycerol + (9Z-octadecenoyl)-sn-glycero-3-phosphocholine. The enzyme catalyses 1-O-hexadecyl-2-O-methyl-sn-glycerol + 1,2-di-(9Z-octadecenoyl)-sn-glycero-3-phosphocholine = 1-O-hexadecyl-2-O-methyl-3-(9Z)-octadecenoyl-sn-glycerol + (9Z-octadecenoyl)-sn-glycero-3-phosphocholine. It carries out the reaction a 1,2-diacyl-sn-glycero-3-phosphoethanolamine + H2O = a 1-acyl-sn-glycero-3-phosphoethanolamine + a fatty acid + H(+). The catalysed reaction is 1-acyl-2-(5Z,8Z,11Z,14Z)-eicosatetraenoyl-sn-glycero-3-phosphoethanolamine + H2O = a 1-acyl-sn-glycero-3-phosphoethanolamine + (5Z,8Z,11Z,14Z)-eicosatetraenoate + H(+). It catalyses the reaction a 1,2-diacyl-sn-glycero-3-phospho-(1'-sn-glycerol) + H2O = 1-acyl-sn-glycero-3-phospho-(1'-sn-glycerol) + a fatty acid + H(+). The enzyme catalyses 1-hexadecanoyl-2-(9Z-octadecenoyl)-sn-glycero-3-phospho-(1'-sn-glycerol) + H2O = 1-hexadecanoyl-sn-glycero-3-phospho-(1'-sn-glycerol) + (9Z)-octadecenoate + H(+). It carries out the reaction a 1,2-diacyl-sn-glycero-3-phospho-(1'-sn-glycerol) + H2O = 2-acyl-sn-glycero-3-phospho-(1'-sn-glycerol) + a fatty acid + H(+). The catalysed reaction is 1-hexadecanoyl-2-(9Z-octadecenoyl)-sn-glycero-3-phospho-(1'-sn-glycerol) + H2O = 2-(9Z-octadecenoyl)-sn-glycero-3-phospho-(1'-sn-glycerol) + hexadecanoate + H(+). With respect to regulation, inhibited by zinc ions at neutral pH. Zinc ions in plasma may keep the enzyme from hydrolyzing inappropriate substrates. Its function is as follows. Has dual calcium-independent phospholipase and O-acyltransferase activities with a potential role in glycerophospholipid homeostasis and remodeling of acyl groups of lipophilic alcohols present in acidic cellular compartments. Catalyzes hydrolysis of the ester bond of the fatty acyl group attached at sn-1 or sn-2 position of phospholipids (phospholipase A1 or A2 activity) and transfer it to the hydroxyl group at the first carbon of lipophilic alcohols (O-acyltransferase activity). Among preferred fatty acyl donors are phosphatidylcholines, phosphatidylethanolamines, phosphatidylglycerols and phosphatidylserines. Favors sn-2 over sn-1 deacylation of unsaturated fatty acyl groups of phosphatidylcholines, phosphatidylethanolamines, and phosphatidylglycerols. Among preferred fatty acyl acceptors are natural lipophilic alcohols including short-chain ceramide N-acetyl-sphingosine (C2 ceramide), alkylacylglycerols, monoacylglycerols, and acylethanolamides such as anandamide and oleoylethanolamide. Selectively hydrolyzes the sn-1 fatty acyl group of truncated oxidized phospholipids and may play a role in detoxification of reactive oxidized phospholipids during oxidative stress. Required for normal phospholipid degradation in alveolar macrophages with potential implications in the clearance of pulmonary surfactant, which is mainly composed of dipalmitoylphosphatidylcholine (1,2-dihexadecanoyl-sn-glycero-3-phosphocholine). Involved in the first step of bis(monoacylglycero)phosphate (BMP) de novo synthesis from phosphatidylglycerol (1,2-diacyl-sn-glycero-3-phospho-(1'-sn-glycerol), PG). BMP is an important player in cargo sorting and degradation, regulation of cellular cholesterol levels and intercellular communication. At neutral pH, hydrolyzes the sn-1 fatty acyl group of the lysophosphatidylcholines. The sequence is that of Lysosomal phospholipase A and acyltransferase from Homo sapiens (Human).